The chain runs to 280 residues: Pantothenate synthetase (280 aa).

30–37 (MGYLHEGH) lines the ATP pocket. Residue H37 is the Proton donor of the active site. Q61 lines the (R)-pantoate pocket. Q61 is a binding site for beta-alanine. Position 147-150 (147-150 (GKKD)) interacts with ATP. Q153 is a (R)-pantoate binding site. Residues V176 and 184–187 (MSSR) each bind ATP.

The protein belongs to the pantothenate synthetase family. In terms of assembly, homodimer.

The protein localises to the cytoplasm. The enzyme catalyses (R)-pantoate + beta-alanine + ATP = (R)-pantothenate + AMP + diphosphate + H(+). Its pathway is cofactor biosynthesis; (R)-pantothenate biosynthesis; (R)-pantothenate from (R)-pantoate and beta-alanine: step 1/1. In terms of biological role, catalyzes the condensation of pantoate with beta-alanine in an ATP-dependent reaction via a pantoyl-adenylate intermediate. This chain is Pantothenate synthetase, found in Sulfurihydrogenibium sp. (strain YO3AOP1).